The primary structure comprises 230 residues: Flagellar L-ring protein (230 aa).

The N-terminal stretch at 1 to 22 (MSPLSNFARTALACAVAALLGG) is a signal peptide. Residue Cys-23 is the site of N-palmitoyl cysteine attachment. The S-diacylglycerol cysteine moiety is linked to residue Cys-23.

Belongs to the FlgH family. As to quaternary structure, the basal body constitutes a major portion of the flagellar organelle and consists of four rings (L,P,S, and M) mounted on a central rod.

The protein resides in the cell outer membrane. The protein localises to the bacterial flagellum basal body. Its function is as follows. Assembles around the rod to form the L-ring and probably protects the motor/basal body from shearing forces during rotation. The sequence is that of Flagellar L-ring protein from Stenotrophomonas maltophilia (strain R551-3).